A 132-amino-acid chain; its full sequence is Monothiol glutaredoxin-S9 (132 aa).

A disordered region spans residues 16-38 (ASRPATAAAAPPPPPPRGEEEEV). The Glutaredoxin domain maps to 35-131 (EEEVRRAVAE…PILKEAGALW (97 aa)). Residue C55 participates in [2Fe-2S] cluster binding. The Responsive for interaction with TGA factors signature appears at 129–132 (ALWL).

Belongs to the glutaredoxin family. CC-type subfamily.

The protein localises to the cytoplasm. The protein resides in the nucleus. In terms of biological role, may only reduce GSH-thiol disulfides, but not protein disulfides. This Oryza sativa subsp. japonica (Rice) protein is Monothiol glutaredoxin-S9 (GRXS9).